Here is a 154-residue protein sequence, read N- to C-terminus: UPF0225 protein YPDSF_0962 (154 aa).

This sequence belongs to the UPF0225 family.

The polypeptide is UPF0225 protein YPDSF_0962 (Yersinia pestis (strain Pestoides F)).